Consider the following 945-residue polypeptide: Isoleucine--tRNA ligase (945 aa).

The 'HIGH' region motif lies at 66–76; it reads PYANGDIHLGH. Residue glutamate 581 coordinates L-isoleucyl-5'-AMP. The 'KMSKS' region motif lies at 622 to 626; the sequence is KMSKS. An ATP-binding site is contributed by lysine 625. 4 residues coordinate Zn(2+): cysteine 908, cysteine 911, cysteine 928, and cysteine 931.

It belongs to the class-I aminoacyl-tRNA synthetase family. IleS type 1 subfamily. Monomer. Zn(2+) is required as a cofactor.

It is found in the cytoplasm. The catalysed reaction is tRNA(Ile) + L-isoleucine + ATP = L-isoleucyl-tRNA(Ile) + AMP + diphosphate. In terms of biological role, catalyzes the attachment of isoleucine to tRNA(Ile). As IleRS can inadvertently accommodate and process structurally similar amino acids such as valine, to avoid such errors it has two additional distinct tRNA(Ile)-dependent editing activities. One activity is designated as 'pretransfer' editing and involves the hydrolysis of activated Val-AMP. The other activity is designated 'posttransfer' editing and involves deacylation of mischarged Val-tRNA(Ile). This chain is Isoleucine--tRNA ligase, found in Burkholderia cenocepacia (strain ATCC BAA-245 / DSM 16553 / LMG 16656 / NCTC 13227 / J2315 / CF5610) (Burkholderia cepacia (strain J2315)).